A 508-amino-acid chain; its full sequence is Photosystem II CP47 reaction center protein (508 aa).

6 helical membrane passes run 21–36 (SVHIMHTALVAGWAGS), 101–115 (IVFSGLCFLAAIWHW), 140–156 (GIHLFLSGVACFGFGVF), 203–218 (IAAGTLGILAGLFHLS), 237–252 (VLSSSIAAVFFAAFVV), and 457–472 (SFALLFFFGHIWHGAR).

This sequence belongs to the PsbB/PsbC family. PsbB subfamily. As to quaternary structure, PSII is composed of 1 copy each of membrane proteins PsbA, PsbB, PsbC, PsbD, PsbE, PsbF, PsbH, PsbI, PsbJ, PsbK, PsbL, PsbM, PsbT, PsbX, PsbY, PsbZ, Psb30/Ycf12, at least 3 peripheral proteins of the oxygen-evolving complex and a large number of cofactors. It forms dimeric complexes. It depends on Binds multiple chlorophylls. PSII binds additional chlorophylls, carotenoids and specific lipids. as a cofactor.

It localises to the plastid. The protein resides in the chloroplast thylakoid membrane. One of the components of the core complex of photosystem II (PSII). It binds chlorophyll and helps catalyze the primary light-induced photochemical processes of PSII. PSII is a light-driven water:plastoquinone oxidoreductase, using light energy to abstract electrons from H(2)O, generating O(2) and a proton gradient subsequently used for ATP formation. The polypeptide is Photosystem II CP47 reaction center protein (Jasminum nudiflorum (Winter jasmine)).